Reading from the N-terminus, the 392-residue chain is Speckle-type POZ protein-like (392 aa).

In terms of domain architecture, MATH spans 31–161; it reads KFSYMWTINN…DDKLTLYCEV (131 aa). Residues 200–267 form the BTB domain; sequence TDCSLFVEGK…IYTGGTPHVD (68 aa).

The protein belongs to the Tdpoz family. In terms of assembly, homodimer. Heterodimer with SPOP. Component of cullin-RING-based BCR (BTB-CUL3-RBX1) E3 ubiquitin-protein ligase complexes containing homodimeric SPOPL or the heterodimer formed by SPOP and SPOPL.

Its subcellular location is the nucleus. It participates in protein modification; protein ubiquitination. Component of a cullin-RING-based BCR (BTB-CUL3-RBX1) E3 ubiquitin-protein ligase complex that mediates the ubiquitination and subsequent proteasomal degradation of target proteins, but with relatively low efficiency. The chain is Speckle-type POZ protein-like (spopl) from Xenopus laevis (African clawed frog).